Here is a 597-residue protein sequence, read N- to C-terminus: Elongation factor 4 (597 aa).

The 183-residue stretch at 2–184 (DHIRNFSIIA…SLIAKVPPPK (183 aa)) folds into the tr-type G domain. Residues 14–19 (DHGKST) and 131–134 (NKID) contribute to the GTP site.

This sequence belongs to the TRAFAC class translation factor GTPase superfamily. Classic translation factor GTPase family. LepA subfamily.

It localises to the cell inner membrane. It carries out the reaction GTP + H2O = GDP + phosphate + H(+). Required for accurate and efficient protein synthesis under certain stress conditions. May act as a fidelity factor of the translation reaction, by catalyzing a one-codon backward translocation of tRNAs on improperly translocated ribosomes. Back-translocation proceeds from a post-translocation (POST) complex to a pre-translocation (PRE) complex, thus giving elongation factor G a second chance to translocate the tRNAs correctly. Binds to ribosomes in a GTP-dependent manner. In Burkholderia lata (strain ATCC 17760 / DSM 23089 / LMG 22485 / NCIMB 9086 / R18194 / 383), this protein is Elongation factor 4.